The following is a 609-amino-acid chain: Sterol O-acyltransferase 2 (609 aa).

Over residues 1-15 (MGRTNTSDQLNAISD) the composition is skewed to polar residues. Positions 1-41 (MGRTNTSDQLNAISDKNTKRKSLALDNEYHNNSSSEDDSSK) are disordered. 6 consecutive transmembrane segments (helical) span residues 152–172 (FFGMYVLFWLATAFAMVNNLI), 195–215 (LFKVGLVDLAMYLSTYFAFFV), 229–249 (VGWWLQAAFDGLFLFFWLWIA), 253–273 (CLDFPWIAKVFLVLHSLVFIM), 402–422 (WSYVFGKTFGIFGLIFLMILI), and 451–471 (FLLMDMIPPFLMVYLFTFFLI). Residues 490–496 (FYGPWWS) carry the FYXDWWN motif motif. Transmembrane regions (helical) follow at residues 534–554 (AAIITFLLSSLVHELVMYVIF) and 589–609 (IICWFGFISGPSIICTLYLVF). Residue His546 is part of the active site.

The protein belongs to the membrane-bound acyltransferase family. Sterol o-acyltransferase subfamily.

The protein resides in the endoplasmic reticulum membrane. With respect to regulation, inhibited by the protoberberine derivative HWY-289 in a non-competitive manner. Inhibited by miconazole. Not inhibited by CI-976, polyoxin D, amphotericin B or nikkomycin Z. In terms of biological role, sterol O-acyltransferase that catalyzes the formation of stery esters. The chain is Sterol O-acyltransferase 2 from Candida albicans (Yeast).